The primary structure comprises 416 residues: 3-oxoacyl-[acyl-carrier-protein] synthase 1 (416 aa).

Residues 11 to 415 form the Ketosynthase family 3 (KS3) domain; it reads FPSVVVTAVT…GHNVALAFGR (405 aa). Active-site for beta-ketoacyl synthase activity residues include cysteine 171, histidine 311, and histidine 345. The substrate site is built by histidine 311 and histidine 345.

The protein belongs to the thiolase-like superfamily. Beta-ketoacyl-ACP synthases family.

The protein localises to the cytoplasm. It catalyses the reaction an ultra-long-chain mono-unsaturated fatty acyl-[ACP] + malonyl-[ACP] + H(+) = a 3-oxo-ultra-long-chain mono-unsaturated fatty acyl-[ACP] + holo-[ACP] + CO2. It participates in lipid metabolism; mycolic acid biosynthesis. In terms of biological role, part of the mycobacterial fatty acid elongation system FAS-II, which is involved in mycolic acid biosynthesis. Catalyzes the elongation of long chain acyl-ACP substrates by the addition of two carbons from malonyl-ACP to an acyl acceptor. Involved in the initial extension of the mycolate chain and forms monounsaturated fatty acids that averaged 40 carbons in length. This chain is 3-oxoacyl-[acyl-carrier-protein] synthase 1 (kasA), found in Mycobacterium tuberculosis (strain ATCC 35801 / TMC 107 / Erdman).